A 198-amino-acid polypeptide reads, in one-letter code: Ribonuclease HII (198 aa).

The 191-residue stretch at 5–195 (LRVAGVDEAG…VKAWLASHQG (191 aa)) folds into the RNase H type-2 domain. Residues Asp11, Glu12, and Asp103 each coordinate a divalent metal cation.

The protein belongs to the RNase HII family. Mn(2+) is required as a cofactor. It depends on Mg(2+) as a cofactor.

Its subcellular location is the cytoplasm. It carries out the reaction Endonucleolytic cleavage to 5'-phosphomonoester.. In terms of biological role, endonuclease that specifically degrades the RNA of RNA-DNA hybrids. The sequence is that of Ribonuclease HII from Chromobacterium violaceum (strain ATCC 12472 / DSM 30191 / JCM 1249 / CCUG 213 / NBRC 12614 / NCIMB 9131 / NCTC 9757 / MK).